We begin with the raw amino-acid sequence, 382 residues long: Na(+)/H(+) antiporter NhaA 2 (382 aa).

11 helical membrane passes run 8–28 (FFSSPAAGGIVLIIASAAAII), 49–69 (LSVEHWINDALMAVFFMMVGL), 87–107 (ALPGFAALGGMAVPAAIYVWF), 115–135 (LAGWAIPAATDIAFALGVLAL), 146–166 (IFLSALAILDDMGAVAIIALF), 169–189 (SNISFLMLAGAAVTVALLFIM), 209–229 (FFMLQSGVHATIAGILLALFI), 252–272 (WVTFLILPLFGFANAGVALSG), 286–306 (VALGLFVGKQAGIFGLSLLAV), 325–345 (VSVLCGIGFTMSLFIGNLAFA), and 353–373 (EVKVGVLAGSVLAALAGMLIL).

Belongs to the NhaA Na(+)/H(+) (TC 2.A.33) antiporter family.

It localises to the cell inner membrane. The catalysed reaction is Na(+)(in) + 2 H(+)(out) = Na(+)(out) + 2 H(+)(in). Its function is as follows. Na(+)/H(+) antiporter that extrudes sodium in exchange for external protons. The chain is Na(+)/H(+) antiporter NhaA 2 from Klebsiella pneumoniae subsp. pneumoniae (strain ATCC 700721 / MGH 78578).